Consider the following 54-residue polypeptide: Apelin receptor early endogenous ligand (54 aa).

The N-terminal stretch at 1–22 is a signal peptide; the sequence is MRFQQFLFAFFIFIMSLLLISG. The N-linked (GlcNAc...) asparagine glycan is linked to asparagine 27.

Belongs to the Elabela/Toddler family. Interacts with APLNR. In terms of tissue distribution, expressed in the intima of blood vessels. Expressed in endothelial cells in blood vessels in the heart and lung. Expressed in cytotrophoblasts and syncytiotrophoblasts of first-trimester placental tissue and term placentas (at protein level). Not detected in smooth muscle cells or cardiomyocytes (at protein level). Expressed in kidney. Expressed in blood vessels. Expressed in embryonic (ESCs) and induced (iPSCs) pluripotent stem cells. Most highly expressed in undifferentiated embryonic stem cell and is rapidly down-regulated during differentiation.

Its subcellular location is the secreted. The protein resides in the extracellular space. Functionally, peptide hormone that functions as endogenous ligand for the G-protein-coupled apelin receptor (APLNR/APJ), that plays a role in the regulation of normal cardiovascular function and fluid homeostasis. Functions as a balanced agonist activating both G(i) protein pathway and beta-arrestin pathway of APLNR. Downstream G proteins activation, apelin can inhibit cAMP production and activate key intracellular effectors such as ERKs. On the other hand, APLNR activation induces beta-arrestin recruitment to the membrane leading to desensitization and internalization of the receptor. Required for mesendodermal differentiation, blood vessels formation and heart morphogenesis during early development and for adult cardiovascular homeostasis. Acts as a motogen by promoting mesendodermal cell migration during gastrulation by binding and activating APLNR. Acts as an early embryonic regulator of cellular movement with a role in migration and development of cardiac progenitor cells. May act as a chemoattractant for the activation of angioblast migration toward the embryonic midline, i.e. the position of the future vessel formation, during vasculogenesis. Positively regulates sinus venosus (SV)-derived endothelial cells migration into the developing heart to promote coronary blood vessel sprouting. Plays a role in placental vascular development; promotes placental trophoblast invasion and spiral artery remodeling in the uterus. Involved in the regulation of maternal cardiovascular homeostasis to prevent gestational hypertension and for potent cardioprotective functions during heart failure. Mediates myocardial contractility in an ERK1/2-dependent manner. This Homo sapiens (Human) protein is Apelin receptor early endogenous ligand.